Consider the following 429-residue polypeptide: Argininosuccinate lyase (429 aa).

Belongs to the lyase 1 family. Argininosuccinate lyase subfamily.

The protein localises to the cytoplasm. It catalyses the reaction 2-(N(omega)-L-arginino)succinate = fumarate + L-arginine. It participates in amino-acid biosynthesis; L-arginine biosynthesis; L-arginine from L-ornithine and carbamoyl phosphate: step 3/3. In Pyrobaculum islandicum (strain DSM 4184 / JCM 9189 / GEO3), this protein is Argininosuccinate lyase.